The following is a 188-amino-acid chain: Early nodulin-like protein 5 (188 aa).

An N-terminal signal peptide occupies residues 1-24 (MDSSKKIIIVMFLVTFYMFSCVSS). Residues 25–128 (TEFEVGGENG…GQKMIVKVME (104 aa)) enclose the Phytocyanin domain. A disulfide bridge connects residues Cys-82 and Cys-116. A disordered region spans residues 127–157 (METESSTESPPPSSSSSSSSSSSLPASTPKA). A compositionally biased stretch (low complexity) spans 129–155 (TESSTESPPPSSSSSSSSSSSLPASTP). The GPI-anchor amidated serine moiety is linked to residue Ser-170. A propeptide spans 171-188 (SSGFVVSAVLIVSVFGLV) (removed in mature form).

The protein belongs to the early nodulin-like (ENODL) family. Mostly expressed in leaves and flowers, and, to a lower extent, in stems.

Its subcellular location is the cell membrane. In terms of biological role, may act as a carbohydrate transporter. Mainly required for reproductive functions. This Arabidopsis thaliana (Mouse-ear cress) protein is Early nodulin-like protein 5.